Reading from the N-terminus, the 263-residue chain is Transmembrane protein 176B (263 aa).

The next 4 membrane-spanning stretches (helical) occupy residues Leu-61 to Phe-81, Ala-89 to Ile-109, Leu-125 to Ile-145, and Leu-197 to Val-217. The tract at residues Lys-242–Pro-263 is disordered. Phosphoserine is present on residues Ser-249 and Ser-253.

This sequence belongs to the TMEM176 family. Expressed in spleen by a variety of myeloid cells including macrophages and dendritic cells (at protein level). Ubiquitously expressed with higher expression in lymphoid tissues.

It is found in the nucleus membrane. Functionally, required for the development of cerebellar granule cells. May play a role in the process of maturation of dendritic cells. This is Transmembrane protein 176B (Tmem176b) from Rattus norvegicus (Rat).